Reading from the N-terminus, the 321-residue chain is Phospholipid phosphatase-related protein type 5 (321 aa).

A run of 6 helical transmembrane segments spans residues 6–26 (VALISSMLYFQMVIMAGTVML), 62–82 (AVPPVLLYSLAAGVPVLVIIV), 122–142 (FLGIYAFGLFATDIFVNAGQV), 196–213 (AALSVYAATYLTMYITST), 225–245 (VLCLGLMCLAFLTGLNRVAEY), and 252–272 (VIAGFLVGISIAVFLVVCVVN).

It belongs to the PA-phosphatase related phosphoesterase family.

It is found in the cell membrane. Functionally, induces filopodia formation and promotes neurite growth in a CDC42-independent manner; impedes neurite growth inhibitory-mediated axonal retraction. This Mus musculus (Mouse) protein is Phospholipid phosphatase-related protein type 5.